The sequence spans 127 residues: Fluoride-specific ion channel FluC (127 aa).

4 consecutive transmembrane segments (helical) span residues 7–27 (LLVA…GAWV), 31–51 (LGAG…FLIG), 68–88 (LFLA…SYET), and 97–117 (VGKA…LAFL). Na(+)-binding residues include G76 and T79.

It belongs to the fluoride channel Fluc/FEX (TC 1.A.43) family.

The protein resides in the cell inner membrane. The catalysed reaction is fluoride(in) = fluoride(out). Its activity is regulated as follows. Na(+) is not transported, but it plays an essential structural role and its presence is essential for fluoride channel function. In terms of biological role, fluoride-specific ion channel. Important for reducing fluoride concentration in the cell, thus reducing its toxicity. The polypeptide is Fluoride-specific ion channel FluC (Thermus thermophilus (strain ATCC BAA-163 / DSM 7039 / HB27)).